The sequence spans 116 residues: Propanediol dehydratase-reactivating factor small subunit (116 aa).

Glu-31 is a Mg(2+) binding site.

This sequence belongs to the DdrB/PduH family. Forms a heterotetramer PduG(2)/PduH(2). The cofactor is Mg(2+).

The protein resides in the bacterial microcompartment. It carries out the reaction ATP + H2O = ADP + phosphate + H(+). The protein operates within polyol metabolism; 1,2-propanediol degradation. Its function is as follows. Small subunit of the propanediol dehydratase-reactivating factor (DDR), which reactivates suicidally inhibited adenosylcobalamin-dependent propanediol dehydratase (diol dehydratase, DDH) found in the bacterial microcompartment (BMC) dedicated to 1,2-propanediol (1,2-PD) degradation. Reactivates inactivated DDH in the presence of ATP, Mg(2+) and free adenosylcobalamin (AdoCbl), by mediating the exchange of the tightly bound damaged cofactor AdoCbl for a free intact one. Functionally, expression of a cosmid containing the full 21-gene pdu operon in E.coli allows E.coli to grow on 1,2-propanediol (1,2-PD) with the appearance of bacterial microcompartments (BMC) in its cytoplasm. In terms of biological role, the 1,2-PD-specific bacterial microcompartment (BMC) concentrates low levels of 1,2-PD catabolic enzymes, concentrates volatile reaction intermediates thus enhancing pathway flux and keeps the level of toxic, mutagenic propionaldehyde low. The protein is Propanediol dehydratase-reactivating factor small subunit of Citrobacter freundii.